The primary structure comprises 62 residues: Photosystem II reaction center protein Z (62 aa).

2 helical membrane passes run 8 to 28 (ALIA…VAYA) and 41 to 61 (YLGS…NFFV).

Belongs to the PsbZ family. As to quaternary structure, PSII is composed of 1 copy each of membrane proteins PsbA, PsbB, PsbC, PsbD, PsbE, PsbF, PsbH, PsbI, PsbJ, PsbK, PsbL, PsbM, PsbT, PsbX, PsbY, PsbZ, Psb30/Ycf12, peripheral proteins PsbO, CyanoQ (PsbQ), PsbU, PsbV and a large number of cofactors. It forms dimeric complexes.

The protein resides in the cellular thylakoid membrane. Functionally, may control the interaction of photosystem II (PSII) cores with the light-harvesting antenna, regulates electron flow through the 2 photosystem reaction centers. PSII is a light-driven water plastoquinone oxidoreductase, using light energy to abstract electrons from H(2)O, generating a proton gradient subsequently used for ATP formation. This is Photosystem II reaction center protein Z from Rippkaea orientalis (strain PCC 8801 / RF-1) (Cyanothece sp. (strain PCC 8801)).